Consider the following 260-residue polypeptide: Peptidase inhibitor 15-A (260 aa).

A signal peptide spans 1 to 21 (MNENRLAIDILLLCISCGASA). A propeptide spanning residues 22–62 (LAGFSPTASSSLPATNLTDIGFAPPKYLTEAANIPKTRRKR) is cleaved from the precursor. N-linked (GlcNAc...) asparagine glycosylation is found at Asn37 and Asn126. Residues 73–213 (LDYHNKVRGK…KRATYLVCNY (141 aa)) form the SCP domain.

The protein belongs to the CRISP family.

It localises to the secreted. Its function is as follows. Serine protease inhibitor which displays weak inhibitory activity against trypsin. May play a role in facial patterning during embryonic development. This is Peptidase inhibitor 15-A (pi15a) from Danio rerio (Zebrafish).